Consider the following 249-residue polypeptide: Segregation and condensation protein A (249 aa).

It belongs to the ScpA family. In terms of assembly, component of a cohesin-like complex composed of ScpA, ScpB and the Smc homodimer, in which ScpA and ScpB bind to the head domain of Smc. The presence of the three proteins is required for the association of the complex with DNA.

It is found in the cytoplasm. Its function is as follows. Participates in chromosomal partition during cell division. May act via the formation of a condensin-like complex containing Smc and ScpB that pull DNA away from mid-cell into both cell halves. The polypeptide is Segregation and condensation protein A (Oceanobacillus iheyensis (strain DSM 14371 / CIP 107618 / JCM 11309 / KCTC 3954 / HTE831)).